Consider the following 749-residue polypeptide: Phosphate-regulating neutral endopeptidase PHEX (749 aa).

At 1–20 (MEAETGSTMETGKGTNRGIR) the chain is on the cytoplasmic side. A helical; Signal-anchor for type II membrane protein membrane pass occupies residues 21-37 (IALALFIGGTLVLGTLL). Over 38-749 (FLVSQGLLSF…NRGADSCRLW (712 aa)) the chain is Extracellular. A Peptidase M13 domain is found at 53–749 (YCLKPECIEA…NRGADSCRLW (697 aa)). Cysteine 54 and cysteine 59 are joined by a disulfide. 7 N-linked (GlcNAc...) asparagine glycosylation sites follow: asparagine 71, asparagine 238, asparagine 263, asparagine 290, asparagine 301, asparagine 377, and asparagine 484. 4 disulfides stabilise this stretch: cysteine 77/cysteine 733, cysteine 85/cysteine 693, cysteine 142/cysteine 406, and cysteine 617/cysteine 746. Residue histidine 580 coordinates Zn(2+). The active site involves glutamate 581. The Zn(2+) site is built by histidine 584 and glutamate 642. The Proton donor role is filled by aspartate 646. Asparagine 736 is a glycosylation site (N-linked (GlcNAc...) asparagine).

This sequence belongs to the peptidase M13 family. As to quaternary structure, interacts with MEPE; the interaction is zinc-dependent (via ASARM motif). Zn(2+) is required as a cofactor. Post-translationally, N-glycosylated. Expressed in bone, specifically in the osteoid and in osteocytes. Expressed in teeth, specifically in odontoblasts and ameloblasts. Expressed moderately by macrophages in the liver and has minimal expression in brown adipose tissue. Also expressed in suprabasal layers of the skin.

The protein resides in the cell membrane. In terms of biological role, peptidase that cleaves SIBLING (small integrin-binding ligand, N-linked glycoprotein)-derived ASARM peptides, thus regulating their biological activity. Cleaves ASARM peptides between Ser and Glu or Asp residues. Regulates osteogenic cell differentiation and bone mineralization through the cleavage of the MEPE-derived ASARM peptide. Promotes dentin mineralization and renal phosphate reabsorption by cleaving DMP1- and MEPE-derived ASARM peptides. Inhibits the cleavage of MEPE by CTSB/cathepsin B thus preventing MEPE degradation. This chain is Phosphate-regulating neutral endopeptidase PHEX (Phex), found in Mus musculus (Mouse).